Reading from the N-terminus, the 312-residue chain is Light-independent protochlorophyllide reductase iron-sulfur ATP-binding protein (312 aa).

Residues 55–60 (GIGKST) and Lys84 each bind ATP. Ser59 is a Mg(2+) binding site. Residues Cys140 and Cys174 each coordinate [4Fe-4S] cluster. ATP is bound by residues 225 to 226 (NR) and 249 to 251 (PDL).

It belongs to the NifH/BchL/ChlL family. In terms of assembly, homodimer. Protochlorophyllide reductase is composed of three subunits; BchL, BchN and BchB. [4Fe-4S] cluster serves as cofactor.

The catalysed reaction is chlorophyllide a + oxidized 2[4Fe-4S]-[ferredoxin] + 2 ADP + 2 phosphate = protochlorophyllide a + reduced 2[4Fe-4S]-[ferredoxin] + 2 ATP + 2 H2O. It participates in porphyrin-containing compound metabolism; bacteriochlorophyll biosynthesis (light-independent). Functionally, component of the dark-operative protochlorophyllide reductase (DPOR) that uses Mg-ATP and reduced ferredoxin to reduce ring D of protochlorophyllide (Pchlide) to form chlorophyllide a (Chlide). This reaction is light-independent. The L component serves as a unique electron donor to the NB-component of the complex, and binds Mg-ATP. In Rhodopseudomonas palustris (strain ATCC BAA-98 / CGA009), this protein is Light-independent protochlorophyllide reductase iron-sulfur ATP-binding protein.